Reading from the N-terminus, the 121-residue chain is Small ribosomal subunit protein uS13 (121 aa).

Residues 92–121 (RKGLPMRGQRTRTNARTRKGPRRAAQALKK) are disordered.

The protein belongs to the universal ribosomal protein uS13 family. Part of the 30S ribosomal subunit. Forms a loose heterodimer with protein S19. Forms two bridges to the 50S subunit in the 70S ribosome.

In terms of biological role, located at the top of the head of the 30S subunit, it contacts several helices of the 16S rRNA. In the 70S ribosome it contacts the 23S rRNA (bridge B1a) and protein L5 of the 50S subunit (bridge B1b), connecting the 2 subunits; these bridges are implicated in subunit movement. Contacts the tRNAs in the A and P-sites. The polypeptide is Small ribosomal subunit protein uS13 (Burkholderia cenocepacia (strain HI2424)).